Consider the following 256-residue polypeptide: tRNA-cytidine(32) 2-sulfurtransferase (256 aa).

The short motif at 35 to 40 (SGGKDS) is the PP-loop motif element. Cys110, Cys113, and Cys201 together coordinate [4Fe-4S] cluster.

Belongs to the TtcA family. As to quaternary structure, homodimer. Mg(2+) is required as a cofactor. The cofactor is [4Fe-4S] cluster.

The protein localises to the cytoplasm. It catalyses the reaction cytidine(32) in tRNA + S-sulfanyl-L-cysteinyl-[cysteine desulfurase] + AH2 + ATP = 2-thiocytidine(32) in tRNA + L-cysteinyl-[cysteine desulfurase] + A + AMP + diphosphate + H(+). The protein operates within tRNA modification. Catalyzes the ATP-dependent 2-thiolation of cytidine in position 32 of tRNA, to form 2-thiocytidine (s(2)C32). The sulfur atoms are provided by the cysteine/cysteine desulfurase (IscS) system. This chain is tRNA-cytidine(32) 2-sulfurtransferase, found in Coxiella burnetii (strain Dugway 5J108-111).